A 120-amino-acid chain; its full sequence is Prophage bactoprenol-linked glucose translocase homolog (120 aa).

The Cytoplasmic portion of the chain corresponds to methionine 1 to threonine 9. The chain crosses the membrane as a helical span at residues serine 10–alanine 30. The Periplasmic segment spans residues histidine 31 to asparagine 33. Residues glutamine 34–alanine 54 traverse the membrane as a helical segment. At lysine 55 to threonine 64 the chain is on the cytoplasmic side. Residues methionine 65–alanine 85 form a helical membrane-spanning segment. Over aspartate 86 to cysteine 88 the chain is Periplasmic. The chain crosses the membrane as a helical span at residues alanine 89 to valine 109. The Cytoplasmic segment spans residues tyrosine 110–lysine 120.

The protein belongs to the GtrA family.

The protein resides in the cell inner membrane. Its function is as follows. Involved in O antigen modification. Involved in the translocation of bactoprenol-linked glucose across the cytoplasmic membrane. The protein is Prophage bactoprenol-linked glucose translocase homolog (yfdG) of Escherichia coli (strain K12).